The following is a 345-amino-acid chain: C5a anaphylatoxin chemotactic receptor 1 (345 aa).

Topologically, residues 1–32 (MMVTVSYDYDYNSTFLPDGFVDNYVERLSFGD) are extracellular. 2 positions are modified to sulfotyrosine: tyrosine 9 and tyrosine 11. Asparagine 12 carries an N-linked (GlcNAc...) asparagine glycan. Residues 33–59 (LVAVVIMVVVFLVGVPGNALVVWVTAC) traverse the membrane as a helical segment. At 60 to 64 (EARRH) the chain is on the cytoplasmic side. The chain crosses the membrane as a helical span at residues 65–88 (INAIWFLNLAAADLLSCLALPILL). Residues 89–105 (VSTVHLNHWYFGDTACK) are Extracellular-facing. The cysteines at positions 104 and 183 are disulfide-linked. Residues 106–127 (VLPSLILLNMYTSILLLATISA) form a helical membrane-spanning segment. Over 128 to 148 (DRLLLVLSPIWCQRFRGGCLA) the chain is Cytoplasmic. The chain crosses the membrane as a helical span at residues 149–169 (WTACGLAWVLALLLSSPSFLY). At 170-195 (RRTHNEHFSFKVYCVTDYGRDISKER) the chain is on the extracellular side. The chain crosses the membrane as a helical span at residues 196–221 (AVALVRLLVGFIVPLITLTACYTFLL). Residues 222–237 (LRTWSRKATRSAKTVK) lie on the Cytoplasmic side of the membrane. The chain crosses the membrane as a helical span at residues 238-260 (VVVAVVSSFFVFWLPYQVTGILL). The Extracellular portion of the chain corresponds to 261–277 (AWHSPNSATYRNTKALD). The helical transmembrane segment at 278-298 (AVCVAFAYINCCINPIIYVVA) threads the bilayer. The Cytoplasmic portion of the chain corresponds to 299–345 (GHGFQGRLLKSLPSVLRNVLTEESLDKRHQSFARSTVDTMPQKSESV). Phosphoserine occurs at positions 309, 312, 322, 329, and 333.

It belongs to the G-protein coupled receptor 1 family. Homodimer. May also form higher-order oligomers. Interacts (when phosphorylated) with ARRB1 and ARRB2; the interaction is associated with internalization of C5aR. Post-translationally, sulfation plays a critical role in the association of C5aR with C5a, but no significant role in the ability of the receptor to transduce a signal and mobilize calcium in response to a small peptide agonist. Phosphorylated on serine residues in response to C5a binding, resulting in internalization of the receptor and short-term desensitization to C5a. Expressed strongly in macrophages and spleen. Weak expression detected in lung, liver, brain, heart and kidney.

Its subcellular location is the cell membrane. The protein localises to the cytoplasmic vesicle. Its function is as follows. Receptor for the chemotactic and inflammatory peptide anaphylatoxin C5a. The ligand interacts with at least two sites on the receptor: a high-affinity site on the extracellular N-terminus, and a second site in the transmembrane region which activates downstream signaling events. Receptor activation stimulates chemotaxis, granule enzyme release, intracellular calcium release and superoxide anion production. The protein is C5a anaphylatoxin chemotactic receptor 1 (C5AR1) of Cavia porcellus (Guinea pig).